The following is an 812-amino-acid chain: Outer membrane usher protein FaeD (812 aa).

The signal sequence occupies residues 1-35; sequence MKKYVTTKSVQPVAFRLTTLSLVMSAVLGSASVIA. A disulfide bridge connects residues C793 and C811.

This sequence belongs to the fimbrial export usher family.

It localises to the cell outer membrane. Functionally, involved in the export and assembly of K88ab fimbrial subunits across the outer membrane. In Escherichia coli, this protein is Outer membrane usher protein FaeD (faeD).